Consider the following 302-residue polypeptide: Small ribosomal subunit biogenesis GTPase RsgA (302 aa).

Residues lysine 75–methionine 233 enclose the CP-type G domain. GTP contacts are provided by residues asparagine 124–aspartate 127 and glycine 175–serine 183. Residues cysteine 257, cysteine 262, histidine 264, and cysteine 270 each contribute to the Zn(2+) site.

The protein belongs to the TRAFAC class YlqF/YawG GTPase family. RsgA subfamily. Monomer. Associates with 30S ribosomal subunit, binds 16S rRNA. Zn(2+) serves as cofactor.

Its subcellular location is the cytoplasm. Its function is as follows. One of several proteins that assist in the late maturation steps of the functional core of the 30S ribosomal subunit. Helps release RbfA from mature subunits. May play a role in the assembly of ribosomal proteins into the subunit. Circularly permuted GTPase that catalyzes slow GTP hydrolysis, GTPase activity is stimulated by the 30S ribosomal subunit. The protein is Small ribosomal subunit biogenesis GTPase RsgA of Agathobacter rectalis (strain ATCC 33656 / DSM 3377 / JCM 17463 / KCTC 5835 / VPI 0990) (Eubacterium rectale).